A 377-amino-acid chain; its full sequence is MFASLSSAWMLRLKKYGYWIWLIAVLGIPLSYWWSLGSDYPNAWPWLVISVVFGLIPILDAIVGRDPANPEEASEVPEMEAQGYYRVLSLATVPLLLGMLVWSGWILAHETRWDWVGQLGWILSVGTVMGAIGITVSHELIHKDPQLEQNAGGLLLAAVCYAGFKVEHVRGHHVHVSTPEDASSSRYGQSLYSFLPHAYKHNFLNAWRLEAERLKRKGLPALHWRNELIWWYAISALFLLGFSLAFGWLGAIFFLGQSVMAFTLLEIVNYVEHYGLHRRRLDNGRYERTTPEHSWNSNFLLTNLFLFHLQRHSDHHAYAKRRYQVLRHYDSSPQLPNGYAGMIVLALFPPLWRAVMDPKVRAYYAGEEYQLTDTQRI.

The next 4 helical transmembrane spans lie at 17–37, 43–63, 87–107, and 116–136; these read GYWIWLIAVLGIPLSYWWSLG, AWPWLVISVVFGLIPILDAIV, VLSLATVPLLLGMLVWSGWIL, and VGQLGWILSVGTVMGAIGITV. Positions 138, 142, 168, 172, and 173 each coordinate Fe cation. A helical transmembrane segment spans residues 236 to 256; that stretch reads ALFLLGFSLAFGWLGAIFFLG. Positions 312, 315, and 316 each coordinate Fe cation.

Belongs to the fatty acid desaturase type 1 family. AlkB subfamily. It depends on Fe(3+) as a cofactor.

The protein resides in the cell inner membrane. The catalysed reaction is octane + 2 reduced [rubredoxin] + O2 + 2 H(+) = 2 oxidized [rubredoxin] + octan-1-ol + H2O. Its pathway is hydrocarbon metabolism; alkane degradation. In terms of biological role, catalyzes the hydroxylation of n-alkanes in the presence of a NADH-rubredoxin reductase and rubredoxin. It preferably hydroxylases C12-C20 hydrocarbons. The protein is Alkane 1-monooxygenase 2 (alkB2) of Pseudomonas aeruginosa (strain ATCC 15692 / DSM 22644 / CIP 104116 / JCM 14847 / LMG 12228 / 1C / PRS 101 / PAO1).